The chain runs to 220 residues: Urease accessory protein UreF (220 aa).

The protein belongs to the UreF family. As to quaternary structure, ureD, UreF and UreG form a complex that acts as a GTP-hydrolysis-dependent molecular chaperone, activating the urease apoprotein by helping to assemble the nickel containing metallocenter of UreC. The UreE protein probably delivers the nickel.

Its subcellular location is the cytoplasm. Its function is as follows. Required for maturation of urease via the functional incorporation of the urease nickel metallocenter. This is Urease accessory protein UreF from Bordetella bronchiseptica (strain ATCC BAA-588 / NCTC 13252 / RB50) (Alcaligenes bronchisepticus).